The sequence spans 239 residues: MKLSMTLSLFAATAMGQTMCSQYDSASSPPYSVNQNLWGEYQGTGSQCVYVDKLSSSGASWHTKWTWSGGEGTVKSYSNSGLTFDKKLVSDVSSIPTSVTWSQDDTNVQADVSYDLFTAANADHATSSGDYELMIWLARYGSVQPIGKQIATATVGGKSWEVWYGTSTQAGAEQKTYSFVAGSPINSWSGDIKDFFNYLTQNQGFPASSQHLITLQFGTEPFTGGPATFTVDNWTASVN.

The signal sequence occupies residues 1 to 16; the sequence is MKLSMTLSLFAATAMG.

Belongs to the glycosyl hydrolase 12 (cellulase H) family.

The enzyme catalyses Endohydrolysis of (1-&gt;4)-beta-D-glucosidic linkages in cellulose, lichenin and cereal beta-D-glucans.. In terms of biological role, has carboxylmethylcellulase activity. This chain is Endoglucanase A (cekA), found in Aspergillus kawachii (strain NBRC 4308) (White koji mold).